The following is a 347-amino-acid chain: 3-isopropylmalate dehydrogenase (347 aa).

Residue glycine 76–glutamate 87 coordinates NAD(+). Arginine 94, arginine 104, arginine 132, and aspartate 217 together coordinate substrate. Mg(2+) is bound by residues aspartate 217, aspartate 241, and aspartate 245. Glycine 275–asparagine 287 provides a ligand contact to NAD(+).

Belongs to the isocitrate and isopropylmalate dehydrogenases family. LeuB type 1 subfamily. Homodimer. Mg(2+) serves as cofactor. Requires Mn(2+) as cofactor.

The protein localises to the cytoplasm. It catalyses the reaction (2R,3S)-3-isopropylmalate + NAD(+) = 4-methyl-2-oxopentanoate + CO2 + NADH. It participates in amino-acid biosynthesis; L-leucine biosynthesis; L-leucine from 3-methyl-2-oxobutanoate: step 3/4. Functionally, catalyzes the oxidation of 3-carboxy-2-hydroxy-4-methylpentanoate (3-isopropylmalate) to 3-carboxy-4-methyl-2-oxopentanoate. The product decarboxylates to 4-methyl-2 oxopentanoate. The polypeptide is 3-isopropylmalate dehydrogenase (Staphylococcus epidermidis (strain ATCC 12228 / FDA PCI 1200)).